Here is a 168-residue protein sequence, read N- to C-terminus: NADH-quinone oxidoreductase subunit B (168 aa).

[4Fe-4S] cluster is bound by residues Cys-37, Cys-38, Cys-103, and Cys-132.

Belongs to the complex I 20 kDa subunit family. NDH-1 is composed of 14 different subunits. Subunits NuoB, C, D, E, F, and G constitute the peripheral sector of the complex. [4Fe-4S] cluster is required as a cofactor.

Its subcellular location is the cell inner membrane. The catalysed reaction is a quinone + NADH + 5 H(+)(in) = a quinol + NAD(+) + 4 H(+)(out). Its function is as follows. NDH-1 shuttles electrons from NADH, via FMN and iron-sulfur (Fe-S) centers, to quinones in the respiratory chain. The immediate electron acceptor for the enzyme in this species is believed to be ubiquinone. Couples the redox reaction to proton translocation (for every two electrons transferred, four hydrogen ions are translocated across the cytoplasmic membrane), and thus conserves the redox energy in a proton gradient. The protein is NADH-quinone oxidoreductase subunit B of Campylobacter fetus subsp. fetus (strain 82-40).